The primary structure comprises 338 residues: Glyceraldehyde-3-phosphate dehydrogenase (338 aa).

Residues 11–12 and Gly111 contribute to the NAD(+) site; that span reads TI. Position 140–142 (140–142) interacts with D-glyceraldehyde 3-phosphate; that stretch reads SCN. The active-site Nucleophile is the Cys141. Residue Arg169 coordinates NAD(+). Positions 170–195 are disordered; the sequence is GSDPSEVKKGPINSIVPNPPKVPSHH. Position 195–196 (195–196) interacts with D-glyceraldehyde 3-phosphate; sequence HG. Gln302 serves as a coordination point for NAD(+).

Belongs to the glyceraldehyde-3-phosphate dehydrogenase family. In terms of assembly, homotetramer.

It is found in the cytoplasm. The enzyme catalyses D-glyceraldehyde 3-phosphate + phosphate + NADP(+) = (2R)-3-phospho-glyceroyl phosphate + NADPH + H(+). It carries out the reaction D-glyceraldehyde 3-phosphate + phosphate + NAD(+) = (2R)-3-phospho-glyceroyl phosphate + NADH + H(+). It functions in the pathway carbohydrate degradation; glycolysis; pyruvate from D-glyceraldehyde 3-phosphate: step 1/5. This Methanobrevibacter smithii (strain ATCC 35061 / DSM 861 / OCM 144 / PS) protein is Glyceraldehyde-3-phosphate dehydrogenase.